A 300-amino-acid chain; its full sequence is Elongator complex protein 5 (300 aa).

Serine 252 bears the Phosphoserine mark. Positions 264–300 (QQALLRPRPGQATSHIFYEPDAYDDLDQEDPDDDLDI) are disordered. Residues 284 to 300 (DAYDDLDQEDPDDDLDI) show a composition bias toward acidic residues.

Belongs to the ELP5 family. As to quaternary structure, component of the elongator complex which consists of ELP1, ELP2, ELP3, ELP4, ELP5 and ELP6; in the complex, is required for optimal binding of ELP3 to ELP4. Tyrosine-phosphorylated. In terms of tissue distribution, ubiquitously expressed with high levels in heart, brain, liver, skeletal muscle and testis.

It localises to the nucleus. The protein localises to the cytoplasm. It functions in the pathway tRNA modification; 5-methoxycarbonylmethyl-2-thiouridine-tRNA biosynthesis. Functionally, component of the elongator complex which is required for multiple tRNA modifications, including mcm5U (5-methoxycarbonylmethyl uridine), mcm5s2U (5-methoxycarbonylmethyl-2-thiouridine), and ncm5U (5-carbamoylmethyl uridine). The elongator complex catalyzes formation of carboxymethyluridine in the wobble base at position 34 in tRNAs. Involved in cell migration. The sequence is that of Elongator complex protein 5 from Homo sapiens (Human).